Here is a 490-residue protein sequence, read N- to C-terminus: V-type proton ATPase subunit B (490 aa).

Arg-380 is an ATP binding site.

The protein belongs to the ATPase alpha/beta chains family. In terms of assembly, V-ATPase is a heteromultimeric enzyme made up of two complexes: the ATP-hydrolytic V1 complex and the proton translocation V0 complex. The V1 complex consists of three catalytic AB heterodimers that form a heterohexamer, three peripheral stalks each consisting of EG heterodimers, one central rotor including subunits D and F, and the regulatory subunits C and H. The proton translocation complex V0 consists of the proton transport subunit a, a ring of proteolipid subunits c9c'', rotary subunit d, subunits e and f, and the accessory subunits VhaAC45 and ATP6AP2. In terms of tissue distribution, expressed in Malpighian tubules, rectum, antennal palps and oviduct.

Its function is as follows. Non-catalytic subunit of the V1 complex of vacuolar(H+)-ATPase (V-ATPase), a multisubunit enzyme composed of a peripheral complex (V1) that hydrolyzes ATP and a membrane integral complex (V0) that translocates protons. V-ATPase is responsible for acidifying and maintaining the pH of intracellular compartments and in some cell types, is targeted to the plasma membrane, where it is responsible for acidifying the extracellular environment. Essential for the proper assembly and activity of V-ATPase. This chain is V-type proton ATPase subunit B (Vha55), found in Drosophila melanogaster (Fruit fly).